We begin with the raw amino-acid sequence, 66 residues long: Protein translocase subunit SecE (66 aa).

The helical transmembrane segment at 29–49 (LVASTLVVVVAVFIFSLICLV) threads the bilayer.

This sequence belongs to the SecE/SEC61-gamma family. In terms of assembly, component of the Sec protein translocase complex. Heterotrimer consisting of SecY, SecE and SecG subunits. The heterotrimers can form oligomers, although 1 heterotrimer is thought to be able to translocate proteins. Interacts with the ribosome. Interacts with SecDF, and other proteins may be involved. Interacts with SecA.

The protein resides in the cell inner membrane. In terms of biological role, essential subunit of the Sec protein translocation channel SecYEG. Clamps together the 2 halves of SecY. May contact the channel plug during translocation. This chain is Protein translocase subunit SecE, found in Rickettsia felis (strain ATCC VR-1525 / URRWXCal2) (Rickettsia azadi).